Here is a 422-residue protein sequence, read N- to C-terminus: Vitamin D3 receptor (422 aa).

Positions 21 to 96 (PRICGVCGDR…IGMMKEFILT (76 aa)) form a DNA-binding region, nuclear receptor. Zn(2+) contacts are provided by C24, C27, C41, C44, C60, C66, C76, and C79. 2 consecutive NR C4-type zinc fingers follow at residues 24–44 (CGVC…CEGC) and 60–84 (CPFN…LKRC). The segment at 97–126 (DEEVQRKREMIMKRKEEEALKDSLRPKLSE) is hinge. Residues 127–418 (EQQHIIAILL…LTPLVLEVFG (292 aa)) form the NR LBD domain. Residue Y143 coordinates calcitriol. The interval 161 to 185 (VSTGSYSPRPTLSFSGDSSSNSDLY) is disordered. A compositionally biased stretch (polar residues) spans 162 to 172 (STGSYSPRPTL). Residues 173–182 (SFSGDSSSNS) are compositionally biased toward low complexity. S232 lines the calcitriol pocket. The tract at residues 241–259 (KMIPGFRDLTSDDQIVLLK) is interaction with coactivator LXXLL motif. Calcitriol contacts are provided by R269, S273, H300, and H392. A 9aaTAD motif is present at residues 411 to 419 (PLVLEVFGN).

The protein belongs to the nuclear hormone receptor family. NR1 subfamily. Homodimer in the absence of bound vitamin D3. Heterodimer with RXRA after vitamin D3 binding. Interacts with MED1, NCOA1, NCOA2, NCOA3 and NCOA6 coactivators, leading to a strong increase of transcription of target genes. Interacts with the corepressor NCOR1. Interacts with SNW1. Interacts with IRX4, the interaction does not affect its transactivation activity. Interacts with CRY1. Interacts with CRY2 in a ligand-dependent manner. In terms of processing, ubiquitinated by UBR5, leading to its degradation: UBR5 specifically recognizes and binds ligand-bound VDR when it is not associated with coactivators (NCOAs). In presence of NCOAs, the UBR5-degron is not accessible, preventing its ubiquitination and degradation.

It localises to the nucleus. It is found in the cytoplasm. In terms of biological role, nuclear receptor for calcitriol, the active form of vitamin D3 which mediates the action of this vitamin on cells. Enters the nucleus upon vitamin D3 binding where it forms heterodimers with the retinoid X receptor/RXR. The VDR-RXR heterodimers bind to specific response elements on DNA and activate the transcription of vitamin D3-responsive target genes. Plays a central role in calcium homeostasis. Also functions as a receptor for the secondary bile acid lithocholic acid (LCA) and its metabolites. This is Vitamin D3 receptor (Vdr) from Mus musculus (Mouse).